The primary structure comprises 339 residues: MKVGILGGSGYAGAELYRLLLNHPNFNVTFISSEKYAGKPVEKMLKGFAHNGHSHNLRFNHLDDLPFDLDFVFSALPTGVLPKYVEKILEKTSLIFNVSGDFRFKDATTLQQYYPETLAIESDQILSSYYIPEFSDFDKNANIINLPGCMALASIYAAYPLVKNKLINPNIFVDVKTGSSGAGKSTKETAADRFGNFRLYRAFNHRHLPEIAMALGSSVGKVGFAAYSLDISRGIYASVYSQIKKGVTEVDVKKAYFKTYKSCKFVANLTGKQSVPMLKSTNGTNFAEVKATVHEGQCIAVVSLDNLLKGAAGQAVQAANKYYQLVEDTGLDTLAGMWP.

Cys149 is an active-site residue.

Belongs to the NAGSA dehydrogenase family. Type 1 subfamily.

It is found in the cytoplasm. It catalyses the reaction N-acetyl-L-glutamate 5-semialdehyde + phosphate + NADP(+) = N-acetyl-L-glutamyl 5-phosphate + NADPH + H(+). Its pathway is amino-acid biosynthesis; L-arginine biosynthesis; N(2)-acetyl-L-ornithine from L-glutamate: step 3/4. Its function is as follows. Catalyzes the NADPH-dependent reduction of N-acetyl-5-glutamyl phosphate to yield N-acetyl-L-glutamate 5-semialdehyde. This chain is N-acetyl-gamma-glutamyl-phosphate reductase 1, found in Lactiplantibacillus plantarum (strain ATCC BAA-793 / NCIMB 8826 / WCFS1) (Lactobacillus plantarum).